The sequence spans 404 residues: MSYSCGLPSLSCRTSCSSRPCVPPSCHGCTLPGACNIPANVSNCNWFCEGSFNGSEKETMQFLNDRLASYLEKVRQLERDNAELENLIRERSQQQEPLVCASYQSYFKTIEELQQKILCSKSENARLVVQIDNAKLASDDFRTKYETELSLRQLVESDINGLRRILDELTLCRSDLEAQVESLKEELLCLKQNHEQEVNTLRCQLGDRLNVEVDAAPTVDLNQVLNETRSQYEALVETNRREVEQWFATQTEELNKQVVSSSEQLQSYQAEIIELRRTVNALEIELQAQHNLRDSLENTLTESEARYSSQLSQVQRLITNVESQLAEIRSDLERQNQEYQVLLDVRARLECEINTYRSLLESEDCKLPSNPCATTNACDKSTGPCISNPCGLRARCGPCNTFGY.

The tract at residues 1–56 (MSYSCGLPSLSCRTSCSSRPCVPPSCHGCTLPGACNIPANVSNCNWFCEGSFNGSE) is head. An IF rod domain is found at 56–367 (EKETMQFLND…SLLESEDCKL (312 aa)). The segment at 57–91 (KETMQFLNDRLASYLEKVRQLERDNAELENLIRER) is coil 1A. Residues 92–102 (SQQQEPLVCAS) form a linker 1 region. The coil 1B stretch occupies residues 103 to 203 (YQSYFKTIEE…HEQEVNTLRC (101 aa)). Positions 204–219 (QLGDRLNVEVDAAPTV) are linker 12. The tract at residues 220–363 (DLNQVLNETR…NTYRSLLESE (144 aa)) is coil 2. Positions 364-404 (DCKLPSNPCATTNACDKSTGPCISNPCGLRARCGPCNTFGY) are tail.

This sequence belongs to the intermediate filament family. In terms of tissue distribution, expressed in the hair follicles.

In Homo sapiens (Human), this protein is Keratin, type I cuticular Ha3-I (KRT33A).